The primary structure comprises 92 residues: Serine rich endogenous peptide 11 (92 aa).

The first 29 residues, 1–29 (MENNTFSSKSINLLILLLLLCTFLCQTES), serve as a signal peptide directing secretion. Residues 50–92 (PNTDIGTPSSTSDRGGGGNGRRLMSQMDVGASSSGQGGGRNRH) are disordered. The segment covering 53 to 62 (DIGTPSSTSD) has biased composition (polar residues). 2 short sequence motifs (SCOOP motif) span residues 53–67 (DIGTPSSTSDRGGGG) and 75–89 (QMDVGASSSGQGGGR). Short sequence motifs (sxS motif essential for MIK2 binding) lie at residues 59–61 (STS) and 81–83 (SSS).

The protein belongs to the serine rich endogenous peptide (SCOOP) phytocytokine family. Interacts with MIK2 (via extracellular leucine-rich repeat domain); this interaction triggers the formation of complex between MIK2 and the BAK1/SERK3 and SERK4 coreceptors, and subsequent BAK1 activation by phosphorylation. As to expression, mostly expressed in seedlings shoots and roots, and, to a lower extent, in leaves.

The protein localises to the cell membrane. It localises to the secreted. It is found in the extracellular space. Its subcellular location is the apoplast. Its function is as follows. Brassicaceae-specific phytocytokine (plant endogenous peptide released into the apoplast) perceived by MIK2 in a BAK1/SERK3 and SERK4 coreceptors-dependent manner, that modulates various physiological and antimicrobial processes including growth prevention and reactive oxygen species (ROS) response regulation. In Arabidopsis thaliana (Mouse-ear cress), this protein is Serine rich endogenous peptide 11.